Consider the following 94-residue polypeptide: Co-chaperonin GroES (94 aa).

The protein belongs to the GroES chaperonin family. Heptamer of 7 subunits arranged in a ring. Interacts with the chaperonin GroEL.

It is found in the cytoplasm. Functionally, together with the chaperonin GroEL, plays an essential role in assisting protein folding. The GroEL-GroES system forms a nano-cage that allows encapsulation of the non-native substrate proteins and provides a physical environment optimized to promote and accelerate protein folding. GroES binds to the apical surface of the GroEL ring, thereby capping the opening of the GroEL channel. This Clostridioides difficile (Peptoclostridium difficile) protein is Co-chaperonin GroES.